Reading from the N-terminus, the 87-residue chain is Small ribosomal subunit protein bS20 (87 aa).

The segment at 1-21 (MANIKQQIKRNKTNEKRRLKN) is disordered. Residues 7–20 (QIKRNKTNEKRRLK) show a composition bias toward basic residues.

The protein belongs to the bacterial ribosomal protein bS20 family.

Its function is as follows. Binds directly to 16S ribosomal RNA. This chain is Small ribosomal subunit protein bS20, found in Phytoplasma mali (strain AT).